A 115-amino-acid chain; its full sequence is Phosphoribosyl-AMP cyclohydrolase (115 aa).

Residue D80 coordinates Mg(2+). Position 81 (C81) interacts with Zn(2+). Positions 82 and 84 each coordinate Mg(2+). 2 residues coordinate Zn(2+): C97 and C104.

This sequence belongs to the PRA-CH family. In terms of assembly, homodimer. Requires Mg(2+) as cofactor. It depends on Zn(2+) as a cofactor.

It is found in the cytoplasm. It carries out the reaction 1-(5-phospho-beta-D-ribosyl)-5'-AMP + H2O = 1-(5-phospho-beta-D-ribosyl)-5-[(5-phospho-beta-D-ribosylamino)methylideneamino]imidazole-4-carboxamide. Its pathway is amino-acid biosynthesis; L-histidine biosynthesis; L-histidine from 5-phospho-alpha-D-ribose 1-diphosphate: step 3/9. Functionally, catalyzes the hydrolysis of the adenine ring of phosphoribosyl-AMP. This Mycobacterium sp. (strain MCS) protein is Phosphoribosyl-AMP cyclohydrolase.